A 232-amino-acid polypeptide reads, in one-letter code: Thiamine import ATP-binding protein ThiQ (232 aa).

An ABC transporter domain is found at 2–230 (LKLTDITWLY…KASASALLGI (229 aa)). 32-39 (GPSGAGKS) serves as a coordination point for ATP.

The protein belongs to the ABC transporter superfamily. Thiamine importer (TC 3.A.1.19.1) family. As to quaternary structure, the complex is composed of two ATP-binding proteins (ThiQ), two transmembrane proteins (ThiP) and a solute-binding protein (ThiB).

It is found in the cell inner membrane. The catalysed reaction is thiamine(out) + ATP + H2O = thiamine(in) + ADP + phosphate + H(+). In terms of biological role, part of the ABC transporter complex ThiBPQ involved in thiamine import. Responsible for energy coupling to the transport system. The protein is Thiamine import ATP-binding protein ThiQ of Escherichia coli O157:H7.